Here is a 170-residue protein sequence, read N- to C-terminus: Acireductone dioxygenase (170 aa).

Positions 99, 101, 105, and 144 each coordinate Fe(2+). 4 residues coordinate Ni(2+): His99, His101, Glu105, and His144.

It belongs to the acireductone dioxygenase (ARD) family. Monomer. The cofactor is Fe(2+). Ni(2+) serves as cofactor.

The catalysed reaction is 1,2-dihydroxy-5-(methylsulfanyl)pent-1-en-3-one + O2 = 3-(methylsulfanyl)propanoate + CO + formate + 2 H(+). It carries out the reaction 1,2-dihydroxy-5-(methylsulfanyl)pent-1-en-3-one + O2 = 4-methylsulfanyl-2-oxobutanoate + formate + 2 H(+). Its pathway is amino-acid biosynthesis; L-methionine biosynthesis via salvage pathway; L-methionine from S-methyl-5-thio-alpha-D-ribose 1-phosphate: step 5/6. Catalyzes 2 different reactions between oxygen and the acireductone 1,2-dihydroxy-3-keto-5-methylthiopentene (DHK-MTPene) depending upon the metal bound in the active site. Fe-containing acireductone dioxygenase (Fe-ARD) produces formate and 2-keto-4-methylthiobutyrate (KMTB), the alpha-ketoacid precursor of methionine in the methionine recycle pathway. Ni-containing acireductone dioxygenase (Ni-ARD) produces methylthiopropionate, carbon monoxide and formate, and does not lie on the methionine recycle pathway. This Bacillus cereus (strain ATCC 10987 / NRS 248) protein is Acireductone dioxygenase.